Reading from the N-terminus, the 25-residue chain is Alpha-lytic protease (25 aa).

The protein belongs to the peptidase S1 family.

It carries out the reaction Preferential cleavage: Ala-|-Xaa, Val-|-Xaa in bacterial cell walls, elastin and other proteins.. This is Alpha-lytic protease from Achromobacter lyticus.